Here is a 302-residue protein sequence, read N- to C-terminus: Probable 2-(5''-triphosphoribosyl)-3'-dephosphocoenzyme-A synthase (302 aa).

It belongs to the CitG/MdcB family.

The catalysed reaction is 3'-dephospho-CoA + ATP = 2'-(5''-triphospho-alpha-D-ribosyl)-3'-dephospho-CoA + adenine. The polypeptide is Probable 2-(5''-triphosphoribosyl)-3'-dephosphocoenzyme-A synthase (Albidiferax ferrireducens (strain ATCC BAA-621 / DSM 15236 / T118) (Rhodoferax ferrireducens)).